Consider the following 612-residue polypeptide: MCGIVGANSTRNVTNILIEGLKKLEYRGYDSAGLAIIDDKNNIDICKEVGKVIELEKSVHNLANFKGDIGIAHTRWATHGKPSKNNSHPHASESFCIVHNGVIENFAELKKVLINDGYKFKSDTDTEVIAHLLQKEWRDNFSIVDNIKYIMAMLKGAYAVAIISQKFSDKIVAVRSGSPLVIGVGIDENFISSDALSLLPVTNKFSYLDEGDIAIISKDNVEVFDNNGAAKNLEVEEYNYSSSSASKDGYKHYMLKEIYEQPEAVSNTILASLADGEISLDSFDKRAKELFEKTKHICIVACGTSYNAGMTAKYWIEKYAKVPCSVEIASEIRYRDNVVVDGSLFVSISQSGETADTLESLRKSKKQNYVGSMCICNVPNSSLVRESDIAFMTKAGVEIGVASTKAFTTQLVALAIFTLVIAKLKNSLTDQQIAKYTEELKNIRALVMGALKLDTEIDQISEYFSDKEHTIFLGRGLYYPIAIEGALKLKEISYIHAEAYPSGELKHGPLALVDKNMPIVAVVPNDELLDKTLSNLQEVHARGGKLILFVDKAVKERVNFDNSIVLELDAGHDFSAPVVFTIPLQLLSYHVAIIKGTDVDQPRNLAKSVTVE.

C2 functions as the Nucleophile; for GATase activity in the catalytic mechanism. The Glutamine amidotransferase type-2 domain maps to 2-219 (CGIVGANSTR…EGDIAIISKD (218 aa)). 2 consecutive SIS domains span residues 287–427 (AKEL…LKNS) and 460–602 (ISEY…VDQP). The active-site For Fru-6P isomerization activity is K607.

In terms of assembly, homodimer.

It is found in the cytoplasm. It carries out the reaction D-fructose 6-phosphate + L-glutamine = D-glucosamine 6-phosphate + L-glutamate. Its function is as follows. Catalyzes the first step in hexosamine metabolism, converting fructose-6P into glucosamine-6P using glutamine as a nitrogen source. This Francisella tularensis subsp. tularensis (strain SCHU S4 / Schu 4) protein is Glutamine--fructose-6-phosphate aminotransferase [isomerizing].